Here is a 251-residue protein sequence, read N- to C-terminus: Short chain dehydrogenase gsfK (251 aa).

NADP(+) contacts are provided by Leu-14, Thr-33, Glu-60, Asn-88, and Lys-122. Residues Ser-143 and Tyr-161 each act as proton donor in the active site. The NADP(+) site is built by Tyr-161, Lys-165, Val-192, and Thr-194. Lys-165 serves as the catalytic Lowers pKa of active site Tyr.

The protein belongs to the short-chain dehydrogenases/reductases (SDR) family.

The protein operates within secondary metabolite biosynthesis; terpenoid biosynthesis. Functionally, short chain dehydrogenase; part of the gene cluster that mediates the biosynthesis of griseofulvin, an important antifungal drug that has been in use for a long time for treating dermatophyte infections. The first step of the pathway is the formation of the heptaketide backbone by gsfA which is initiated by priming with acetyl-CoA, followed by sequential condensations of 6 malonyl-CoA units. The resulting benzophenone can undergo a spontaneous dehydration to form norlichexanthone. However, the true precursor for the griseofulvin biosynthesis is not norlichexanthone, but the heptaketide benzophenone that is O-methylated at 3-OH by gsfB to produce griseophenone D which is further methylated at 9-OH by gsfC to yield griseophenone C. Griseophenone C is then substrate of halogenase gsfI which is responsible for the regio-specific chlorination at the C13 position to form griseophenone B. The cytochrome P450 gsfF catalyzes the coupling of orcinol and phloroglucinol rings in griseophenone B to form desmethyl-dehydrogriseofulvin A which is further methylated at 5-OH by gsfD to yield dehydrogriseofulvin. Finally, gsfE performs stereospecific reduction of enone 18 of dehydrogriseofulvin to afford the final product griseofulvin. The exact role of gsfK within the pathway has not been identified yet. This is Short chain dehydrogenase gsfK from Penicillium aethiopicum.